A 281-amino-acid polypeptide reads, in one-letter code: UPF0500 protein C1orf216 homolog (281 aa).

Residues 1–12 (MFTIQKPDTVSH) are compositionally biased toward polar residues. The interval 1–197 (MFTIQKPDTV…SSSDSDSISV (197 aa)) is disordered. Residues 45 to 74 (TYDKNENWSQDKKGGEEGENKSKSEDEHSS) are compositionally biased toward basic and acidic residues. Composition is skewed to low complexity over residues 92-102 (STGSEGISLSS), 147-161 (SSSL…VSAS), and 169-178 (PAPTTTPQEN). Residues 179 to 190 (PETEDSDVESSS) are compositionally biased toward acidic residues. The stretch at 198-257 (TLSEAFQSLQDKEKLKEREKEKHHAQLTMYRRLALLRWIRALQQKVRDQQNRLQESFDTI) forms a coiled coil.

It belongs to the UPF0500 family.

This is UPF0500 protein C1orf216 homolog from Xenopus laevis (African clawed frog).